The chain runs to 989 residues: Phosphoenolpyruvate carboxylase (989 aa).

Residues His175 and Lys630 contribute to the active site.

Belongs to the PEPCase type 1 family. The cofactor is Mg(2+).

The enzyme catalyses oxaloacetate + phosphate = phosphoenolpyruvate + hydrogencarbonate. Forms oxaloacetate, a four-carbon dicarboxylic acid source for the tricarboxylic acid cycle. In Prochlorococcus marinus (strain MIT 9515), this protein is Phosphoenolpyruvate carboxylase.